Here is a 310-residue protein sequence, read N- to C-terminus: 2-dehydro-3-deoxygluconokinase (310 aa).

Substrate contacts are provided by residues 29 to 33 (GDTLN), Tyr89, 103 to 105 (YWR), and Arg171. ATP is bound by residues 169 to 171 (NYR), 229 to 234 (KRGADA), and 262 to 265 (AAGD). Residue Asp265 coordinates substrate. Asp265 acts as the Proton acceptor in catalysis.

The protein belongs to the carbohydrate kinase PfkB family.

It carries out the reaction 2-dehydro-3-deoxy-D-gluconate + ATP = 2-dehydro-3-deoxy-6-phospho-D-gluconate + ADP + H(+). Its pathway is carbohydrate acid metabolism; 2-dehydro-3-deoxy-D-gluconate degradation; D-glyceraldehyde 3-phosphate and pyruvate from 2-dehydro-3-deoxy-D-gluconate: step 1/2. Catalyzes the phosphorylation of 2-keto-3-deoxygluconate (KDG) to produce 2-keto-3-deoxy-6-phosphogluconate (KDPG). This chain is 2-dehydro-3-deoxygluconokinase, found in Dickeya dadantii (strain 3937) (Erwinia chrysanthemi (strain 3937)).